Reading from the N-terminus, the 354-residue chain is CX3C chemokine receptor 1 (354 aa).

At 1–32 (MPTSFPELDLENFEYDDSAEACYLGDIVAFGT) the chain is on the extracellular side. A helical membrane pass occupies residues 33–60 (IFLSIFYSLVFTFGLVGNLLVVLALTNS). Residues 61–70 (RKSKSITDIY) lie on the Cytoplasmic side of the membrane. The helical transmembrane segment at 71-91 (LLNLALSDLLFVATLPFWTHY) threads the bilayer. The Extracellular portion of the chain corresponds to 92–104 (LISHEGLHNAMCK). An intrachain disulfide couples cysteine 103 to cysteine 176. A helical transmembrane segment spans residues 105–126 (LTTAFFFIGFFGGIFFITVISI). At 127-143 (DRYLAIVLAANSMNNRT) the chain is on the cytoplasmic side. A helical membrane pass occupies residues 144-168 (VQHGVTISLGVWAAAILVASPQFMF). The Extracellular portion of the chain corresponds to 169-196 (TKRKDNECLGDYPEVLQEIWPVLRNSEV). The helical transmembrane segment at 197–216 (NILGFVLPLLIMSFCYFRIV) threads the bilayer. Topologically, residues 217–232 (RTLFSCKNRKKARAIR) are cytoplasmic. Residues 233-257 (LILLVVVVFFLFWTPYNIVIFLETL) form a helical membrane-spanning segment. At 258 to 274 (KFYNFFPSCGMKRDLRW) the chain is on the extracellular side. The helical transmembrane segment at 275-298 (ALSVTETVAFSHCCLNPFIYAFAG) threads the bilayer. The Cytoplasmic portion of the chain corresponds to 299-354 (EKFRRYLRHLYNKCLAVLCGRPVHAGFSTESQRSRQDSILSSLTHYTSEGEGSLLL). Position 345 is a phosphothreonine (threonine 345).

This sequence belongs to the G-protein coupled receptor 1 family. As to quaternary structure, found in a ternary complex with CX3CL1 and ITGAV:ITGB3 or ITGA4:ITGB1. In terms of processing, this protein is not N-glycosylated which is unusual for G-protein-coupled receptors. As to expression, most abundant in adult spinal cord, brain, kidney, gut, uterus and testes.

It localises to the cell membrane. In terms of biological role, receptor for the C-X3-C chemokine fractalkine (CX3CL1) present on many early leukocyte cells; CX3CR1-CX3CL1 signaling exerts distinct functions in different tissue compartments, such as immune response, inflammation, cell adhesion and chemotaxis. CX3CR1-CX3CL1 signaling mediates cell migratory functions. Responsible for the recruitment of natural killer (NK) cells to inflamed tissues. Acts as a regulator of inflammation process leading to atherogenesis by mediating macrophage and monocyte recruitment to inflamed atherosclerotic plaques, promoting cell survival. Involved in airway inflammation by promoting interleukin 2-producing T helper (Th2) cell survival in inflamed lung. Involved in the migration of circulating monocytes to non-inflamed tissues, where they differentiate into macrophages and dendritic cells. Acts as a negative regulator of angiogenesis, probably by promoting macrophage chemotaxis. Plays a key role in brain microglia by regulating inflammatory response in the central nervous system (CNS) and regulating synapse maturation. Required to restrain the microglial inflammatory response in the CNS and the resulting parenchymal damage in response to pathological stimuli. Involved in brain development by participating in synaptic pruning, a natural process during which brain microglia eliminates extra synapses during postnatal development. Synaptic pruning by microglia is required to promote the maturation of circuit connectivity during brain development. Acts as an important regulator of the gut microbiota by controlling immunity to intestinal bacteria and fungi. Expressed in lamina propria dendritic cells in the small intestine, which form transepithelial dendrites capable of taking up bacteria in order to provide defense against pathogenic bacteria. Required to initiate innate and adaptive immune responses against dissemination of commensal fungi (mycobiota) component of the gut: expressed in mononuclear phagocytes (MNPs) and acts by promoting induction of antifungal IgG antibodies response to confer protection against disseminated C.albicans or C.auris infection. Also acts as a receptor for C-C motif chemokine CCL26, inducing cell chemotaxis. This Rattus norvegicus (Rat) protein is CX3C chemokine receptor 1.